Here is a 311-residue protein sequence, read N- to C-terminus: p-hydroxybenzoic acid efflux pump subunit AaeA (311 aa).

Residues 11 to 31 traverse the membrane as a helical segment; it reads VGITVLVVVLAVIAIFNVWAF.

Belongs to the membrane fusion protein (MFP) (TC 8.A.1) family.

The protein localises to the cell inner membrane. Forms an efflux pump with AaeB. In Yersinia pseudotuberculosis serotype O:1b (strain IP 31758), this protein is p-hydroxybenzoic acid efflux pump subunit AaeA.